The primary structure comprises 539 residues: Lipid scramblase CLPTM1L (539 aa).

The Cytoplasmic segment spans residues 1-10; the sequence is MWSGRSSFTS. The helical transmembrane segment at 11–31 threads the bilayer; sequence LVVGVFLVYVVHTCWVMYGIV. Topologically, residues 32 to 285 are extracellular; that stretch reads YTRPCSGDSN…LKGIFVDTNL (254 aa). Residues N91 and N101 are each glycosylated (N-linked (GlcNAc...) asparagine). Residues 286-306 traverse the membrane as a helical segment; sequence YLLALTFFVAAFHLLFDFLAF. Over 307–325 the chain is Cytoplasmic; sequence KSDISFWKKKKSMIGMSTK. A helical transmembrane segment spans residues 326 to 342; sequence AVLWRCFSTVVIFLFLL. The Extracellular portion of the chain corresponds to 343-403; that stretch reads DEQTSLLVLI…TEKYDAQAMK (61 aa). Residues 404 to 424 form a helical membrane-spanning segment; it reads YLSYLLYPLCVGGAVYSLLNI. Residues 425 to 429 are Cytoplasmic-facing; it reads KYKSW. A helical transmembrane segment spans residues 430-450; it reads YSWLINSFVNGVYAFGFLFML. Residues 451–539 lie on the Extracellular side of the membrane; the sequence is PQLFVNYKMK…EQPKRKPHPD (89 aa).

This sequence belongs to the CLPTM1 family.

It localises to the endoplasmic reticulum membrane. It catalyses the reaction a 6-(alpha-D-glucosaminyl)-1-(1,2-diacyl-sn-glycero-3-phospho)-1D-myo-inositol(in) = a 6-(alpha-D-glucosaminyl)-1-(1,2-diacyl-sn-glycero-3-phospho)-1D-myo-inositol(out). The enzyme catalyses 6-(alpha-D-glucosaminyl)-(1-octadecanoyl,2-(9Z)-octadecenoyl-sn-glycero-3-phospho)-1D-myo-inositol(in) = 6-(alpha-D-glucosaminyl)-(1-octadecanoyl,2-(9Z)-octadecenoyl-sn-glycero-3-phospho)-1D-myo-inositol(out). It carries out the reaction a 1,2-diacyl-sn-glycero-3-phospho-(1D-myo-inositol)(in) = a 1,2-diacyl-sn-glycero-3-phospho-(1D-myo-inositol)(out). The catalysed reaction is a 1,2-diacyl-sn-glycero-3-phosphocholine(in) = a 1,2-diacyl-sn-glycero-3-phosphocholine(out). It catalyses the reaction a 1,2-diacyl-sn-glycero-3-phosphoethanolamine(in) = a 1,2-diacyl-sn-glycero-3-phosphoethanolamine(out). In terms of biological role, scramblase that mediates the translocation of glucosaminylphosphatidylinositol (alpha-D-GlcN-(1-6)-(1,2-diacyl-sn-glycero-3-phospho)-1D-myo-inositol, GlcN-PI) across the endoplasmic reticulum (ER) membrane, from the cytosolic leaflet to the luminal leaflet of the ER membrane, where it participates in the biosynthesis of glycosylphosphatidylinositol (GPI). GPI is a lipid glycoconjugate involved in post-translational modification of proteins. Can also translocate 1,2-diacyl-sn-glycero-3-phospho-(1D-myo-inositol) (phosphatidylinositol or PI), as well as several other phospholipids (1,2-diacyl-sn-glycero-3-phosphocholine, 1,2-diacyl-sn-glycero-3-phosphoethanolamine), and N-acetylglucosaminylphosphatidylinositol (GlcNAc-PI) in vitro. The chain is Lipid scramblase CLPTM1L (Clptm1l) from Mus musculus (Mouse).